Consider the following 96-residue polypeptide: Co-chaperonin GroES (96 aa).

It belongs to the GroES chaperonin family. Heptamer of 7 subunits arranged in a ring. Interacts with the chaperonin GroEL.

It localises to the cytoplasm. In terms of biological role, together with the chaperonin GroEL, plays an essential role in assisting protein folding. The GroEL-GroES system forms a nano-cage that allows encapsulation of the non-native substrate proteins and provides a physical environment optimized to promote and accelerate protein folding. GroES binds to the apical surface of the GroEL ring, thereby capping the opening of the GroEL channel. The protein is Co-chaperonin GroES of Idiomarina loihiensis (strain ATCC BAA-735 / DSM 15497 / L2-TR).